The primary structure comprises 306 residues: Agmatinase (306 aa).

Positions 126, 149, 151, 153, 230, and 232 each coordinate Mn(2+).

Belongs to the arginase family. Agmatinase subfamily. Mn(2+) serves as cofactor.

The catalysed reaction is agmatine + H2O = urea + putrescine. It functions in the pathway amine and polyamine biosynthesis; putrescine biosynthesis via agmatine pathway; putrescine from agmatine: step 1/1. Its function is as follows. Catalyzes the formation of putrescine from agmatine. In Enterobacter sp. (strain 638), this protein is Agmatinase.